Consider the following 244-residue polypeptide: AA9 family lytic polysaccharide monooxygenase B (244 aa).

A signal peptide spans 1–19 (MFLVPLLAALSLSAPKVAA). Residue His-20 coordinates Cu(2+). Residue Tyr-39 participates in (1,4-beta-D-glucosyl)n binding. 2 disulfides stabilise this stretch: Cys-68–Cys-189 and Cys-111–Cys-115. A Cu(2+)-binding site is contributed by His-99. The N-linked (GlcNAc...) asparagine glycan is linked to Asn-152. His-178 and Gln-184 together coordinate O2. Tyr-186 provides a ligand contact to Cu(2+). Residues Asp-224, Tyr-226, and Glu-229 each coordinate (1,4-beta-D-glucosyl)n. Asn-233 carries an N-linked (GlcNAc...) asparagine glycan.

It belongs to the polysaccharide monooxygenase AA9 family. The cofactor is Cu(2+).

The protein localises to the secreted. It carries out the reaction [(1-&gt;4)-beta-D-glucosyl]n+m + reduced acceptor + O2 = 4-dehydro-beta-D-glucosyl-[(1-&gt;4)-beta-D-glucosyl]n-1 + [(1-&gt;4)-beta-D-glucosyl]m + acceptor + H2O.. In terms of biological role, lytic polysaccharide monooxygenase (LPMO) that depolymerizes crystalline and amorphous polysaccharides via the oxidation of scissile alpha- or beta-(1-4)-glycosidic bonds, yielding specifically C1 oxidation product. Catalysis by LPMOs requires the reduction of the active-site copper from Cu(II) to Cu(I) by a reducing agent and H(2)O(2) or O(2) as a cosubstrate. Displays catalytic activity on insoluble cellulose using I-beta microfibril model substrate. The polypeptide is AA9 family lytic polysaccharide monooxygenase B (Heterobasidion irregulare (strain TC 32-1)).